The chain runs to 623 residues: Putative ABC transporter ATP-binding protein MG014 (623 aa).

An ABC transmembrane type-1 domain is found at 16–325 (LILAPFFTFA…YIVLGFILTS (310 aa)). 6 helical membrane passes run 27 to 47 (IVID…VFSI), 81 to 101 (VLAT…LISI), 157 to 177 (FLRL…FAVT), 181 to 201 (DMSI…GILN), 266 to 286 (NIPF…LLVF), and 307 to 327 (IFAF…TSLT). Residues 365–611 (LEFRNISFGL…CSLYQKMKES (247 aa)) enclose the ABC transporter domain. Residue 400-407 (GPTGSGKS) coordinates ATP.

This sequence belongs to the ABC transporter superfamily.

The protein localises to the cell membrane. This Mycoplasma genitalium (strain ATCC 33530 / DSM 19775 / NCTC 10195 / G37) (Mycoplasmoides genitalium) protein is Putative ABC transporter ATP-binding protein MG014.